The sequence spans 1661 residues: Microtubule cross-linking factor 2 (1661 aa).

The interval 1 to 187 (MEAPAAEPPV…EPSVAASSVG (187 aa)) is disordered. 2 stretches are compositionally biased toward low complexity: residues 76-94 (AVAP…VRTG) and 133-149 (LLGL…SAAG). Positions 167-176 (QQPPRPPASP) are enriched in pro residues. A required for association with Golgi apparatus membrane region spans residues 211–240 (PSGLVRELEELRSENDYLKDEIEELRAEML). 2 coiled-coil regions span residues 218-281 (LEEL…AERR) and 310-351 (SMRL…LQTE). A disordered region spans residues 353–373 (ERPREHSLKKRGTRSLGKADK). Coiled coils occupy residues 450–484 (LKLV…MKDH), 820–865 (IKEL…LKED), and 1083–1117 (SQEK…LQKA). Ser-1169 bears the Phosphoserine mark. Residues 1196 to 1221 (AFGFVSSEPGDPEKDTKEKPGLSSRD) form a disordered region. The segment covering 1206-1215 (DPEKDTKEKP) has biased composition (basic and acidic residues). A Phosphoserine modification is found at Ser-1255. 3 disordered regions span residues 1432–1456 (RPCC…DSSK), 1538–1563 (RAPS…ASYH), and 1636–1661 (HSPS…PPSE). Basic and acidic residues predominate over residues 1652–1661 (GEERALPPSE).

Belongs to the MTCL family. As to quaternary structure, interacts with CLASP1 and CLASP2. The C-terminal 25 kDa form occurs as a monomer. Proteolytically cleaved in primary hepatocytes into a C-terminal 80 kDa form. Proteolytically cleaved into a C-terminal SOGA 25 kDa form that is detected in plasma. Post-translationally, phosphorylated during mitosis in a CDK1-dependent manner.

It is found in the cytoplasm. The protein resides in the cytoskeleton. It localises to the golgi apparatus membrane. The protein localises to the midbody. Its subcellular location is the secreted. In terms of biological role, microtubule-associated factor that enables integration of the centrosomal and Golgi-associated microtubules on the Golgi membrane, supporting directional migration. Preferentially acts on the perinuclear microtubules accumulated around the Golgi. Associates with the Golgi membrane through the N-terminal coiled-coil region and directly binds microtubules through the C-terminal domain. Required for faithful chromosome segregation during mitosis. Regulates autophagy by playing a role in the reduction of glucose production in an adiponectin- and insulin-dependent manner. The polypeptide is Microtubule cross-linking factor 2 (Homo sapiens (Human)).